The chain runs to 173 residues: Bifunctional protein PyrR (173 aa).

Positions 93 to 105 match the PRPP-binding motif; it reads VILVDDVLYTGRT.

Belongs to the purine/pyrimidine phosphoribosyltransferase family. PyrR subfamily. As to quaternary structure, homodimer and homohexamer; in equilibrium.

The catalysed reaction is UMP + diphosphate = 5-phospho-alpha-D-ribose 1-diphosphate + uracil. Regulates transcriptional attenuation of the pyrimidine nucleotide (pyr) operon by binding in a uridine-dependent manner to specific sites on pyr mRNA. This disrupts an antiterminator hairpin in the RNA and favors formation of a downstream transcription terminator, leading to a reduced expression of downstream genes. Its function is as follows. Also displays a weak uracil phosphoribosyltransferase activity which is not physiologically significant. The chain is Bifunctional protein PyrR from Streptococcus suis (strain 05ZYH33).